We begin with the raw amino-acid sequence, 72 residues long: Translation initiation factor IF-1 (72 aa).

The S1-like domain occupies 1–72 (MAKEGAIEVE…TRGRIVYRYK (72 aa)).

Belongs to the IF-1 family. As to quaternary structure, component of the 30S ribosomal translation pre-initiation complex which assembles on the 30S ribosome in the order IF-2 and IF-3, IF-1 and N-formylmethionyl-tRNA(fMet); mRNA recruitment can occur at any time during PIC assembly.

The protein resides in the cytoplasm. One of the essential components for the initiation of protein synthesis. Stabilizes the binding of IF-2 and IF-3 on the 30S subunit to which N-formylmethionyl-tRNA(fMet) subsequently binds. Helps modulate mRNA selection, yielding the 30S pre-initiation complex (PIC). Upon addition of the 50S ribosomal subunit IF-1, IF-2 and IF-3 are released leaving the mature 70S translation initiation complex. The polypeptide is Translation initiation factor IF-1 (Corynebacterium diphtheriae (strain ATCC 700971 / NCTC 13129 / Biotype gravis)).